The following is a 155-amino-acid chain: MSKITEQIEEIIQPVLDDLNFELVEIEFTKEGKDHFLRISIDKEGGVDLNDCTLASEKISEVMNEEDPIEQMYYLDVASPGAERPIKTDKALHDAVEQPVFVSLYAPIDGSKEWLGVLQSVTDDHIVIKAQVKEKKKEVEIPRNKIAKARHAVLI.

The protein belongs to the RimP family.

The protein resides in the cytoplasm. Required for maturation of 30S ribosomal subunits. This chain is Ribosome maturation factor RimP, found in Staphylococcus carnosus (strain TM300).